The sequence spans 550 residues: Lariat debranching enzyme (550 aa).

2 residues coordinate a divalent metal cation: Cys-8 and His-10. The residue at position 28 (Ser-28) is a Phosphoserine. The a divalent metal cation site is built by Asp-39 and Asn-84. Positions 124 to 154 are lariat recognition loop; that stretch reads SGIFKSHDYRKGHFECPPYNSSTIRSIYHVR. An N6-acetyllysine modification is found at Lys-128. A divalent metal cation contacts are provided by His-174, His-226, and His-228. The segment at 390-550 is disordered; that stretch reads EHHQCGEYEQ…AVDDGDASAE (161 aa). Polar residues predominate over residues 416 to 426; it reads NTDTSALSSIN. The segment covering 430 to 445 has biased composition (acidic residues); the sequence is IMLDEEEEEEEEEEEA. Polar residues predominate over residues 450–483; sequence SDMNTPSVEPASDQASDLSTSFSDIRNLPSSMFV. Phosphoserine is present on residues Ser-470, Ser-480, Ser-484, Ser-485, Ser-489, Ser-491, Ser-494, Ser-505, and Ser-520. Residues 498-528 are compositionally biased toward basic and acidic residues; that stretch reads KCGETVESGDEKDLAKFPLKRLSDEHEPEQR.

This sequence belongs to the lariat debranching enzyme family. The cofactor is Fe(2+). Zn(2+) serves as cofactor. It depends on Mn(2+) as a cofactor.

It localises to the nucleus. With respect to regulation, active in presence of diverse metals including Fe(2+), Zn(2+), Mn(2+). Also activated by Ca(2+). Binds two metal cations in two adjacent alpha and beta metal-binding pockets. In terms of biological role, cleaves the 2'-5' phosphodiester linkage at the branch point of excised lariat intron RNA and converts them into linear molecules that can be subsequently degraded, thereby facilitating ribonucleotide turnover. Linked to its role in pre-mRNA processing mechanism, may also participate in retrovirus replication and have an antiviral cell-intrinsic defense function. This chain is Lariat debranching enzyme (Dbr1), found in Mus musculus (Mouse).